The sequence spans 504 residues: Maturase K (504 aa).

This sequence belongs to the intron maturase 2 family. MatK subfamily.

It is found in the plastid. Its subcellular location is the chloroplast. Usually encoded in the trnK tRNA gene intron. Probably assists in splicing its own and other chloroplast group II introns. This is Maturase K from Quercus lyrata (Overcup oak).